Consider the following 404-residue polypeptide: Chorismate synthase (404 aa).

NADP(+) contacts are provided by Arg-40 and Arg-46. Residues 133–135, 266–267, Gly-313, 328–332, and Arg-354 contribute to the FMN site; these read RSS, QA, and KPIPT. A disordered region spans residues 283 to 320; it reads PGSQVHDPIEPREDGAQAYPRRTNHAGGTEGGTTTGMP. The segment at 337–357 is disordered; the sequence is LDSVDTATGEPEPTRYERSDI.

Belongs to the chorismate synthase family. Homotetramer. FMNH2 serves as cofactor.

The enzyme catalyses 5-O-(1-carboxyvinyl)-3-phosphoshikimate = chorismate + phosphate. It functions in the pathway metabolic intermediate biosynthesis; chorismate biosynthesis; chorismate from D-erythrose 4-phosphate and phosphoenolpyruvate: step 7/7. Functionally, catalyzes the anti-1,4-elimination of the C-3 phosphate and the C-6 proR hydrogen from 5-enolpyruvylshikimate-3-phosphate (EPSP) to yield chorismate, which is the branch point compound that serves as the starting substrate for the three terminal pathways of aromatic amino acid biosynthesis. This reaction introduces a second double bond into the aromatic ring system. This is Chorismate synthase from Salinibacter ruber (strain DSM 13855 / M31).